A 227-amino-acid chain; its full sequence is Octanoyltransferase (227 aa).

Residues 35 to 210 (DKTPDEIWLV…TFLQLVGYSA (176 aa)) enclose the BPL/LPL catalytic domain. Substrate-binding positions include 74-81 (RGGQVTYH), 141-143 (SLG), and 154-156 (GLA). Catalysis depends on C172, which acts as the Acyl-thioester intermediate.

Belongs to the LipB family.

It localises to the cytoplasm. The catalysed reaction is octanoyl-[ACP] + L-lysyl-[protein] = N(6)-octanoyl-L-lysyl-[protein] + holo-[ACP] + H(+). It participates in protein modification; protein lipoylation via endogenous pathway; protein N(6)-(lipoyl)lysine from octanoyl-[acyl-carrier-protein]: step 1/2. In terms of biological role, catalyzes the transfer of endogenously produced octanoic acid from octanoyl-acyl-carrier-protein onto the lipoyl domains of lipoate-dependent enzymes. Lipoyl-ACP can also act as a substrate although octanoyl-ACP is likely to be the physiological substrate. The polypeptide is Octanoyltransferase (Pectobacterium atrosepticum (strain SCRI 1043 / ATCC BAA-672) (Erwinia carotovora subsp. atroseptica)).